A 334-amino-acid polypeptide reads, in one-letter code: BTB and MATH domain-containing protein 39 (334 aa).

One can recognise an MATH domain in the interval isoleucine 14 to leucine 141. Residues alanine 164–valine 229 form the BTB domain.

The polypeptide is BTB and MATH domain-containing protein 39 (bath-39) (Caenorhabditis elegans).